A 556-amino-acid chain; its full sequence is Dihydroxy-acid dehydratase (556 aa).

Cys47 provides a ligand contact to [2Fe-2S] cluster. Position 79 (Asp79) interacts with Mg(2+). Residue Cys120 participates in [2Fe-2S] cluster binding. Residues Asp121 and Lys122 each contribute to the Mg(2+) site. An N6-carboxylysine modification is found at Lys122. Residue Cys192 coordinates [2Fe-2S] cluster. Glu444 serves as a coordination point for Mg(2+). Residue Ser470 is the Proton acceptor of the active site.

This sequence belongs to the IlvD/Edd family. In terms of assembly, homodimer. It depends on [2Fe-2S] cluster as a cofactor. Requires Mg(2+) as cofactor.

It carries out the reaction (2R)-2,3-dihydroxy-3-methylbutanoate = 3-methyl-2-oxobutanoate + H2O. It catalyses the reaction (2R,3R)-2,3-dihydroxy-3-methylpentanoate = (S)-3-methyl-2-oxopentanoate + H2O. The protein operates within amino-acid biosynthesis; L-isoleucine biosynthesis; L-isoleucine from 2-oxobutanoate: step 3/4. Its pathway is amino-acid biosynthesis; L-valine biosynthesis; L-valine from pyruvate: step 3/4. In terms of biological role, functions in the biosynthesis of branched-chain amino acids. Catalyzes the dehydration of (2R,3R)-2,3-dihydroxy-3-methylpentanoate (2,3-dihydroxy-3-methylvalerate) into 2-oxo-3-methylpentanoate (2-oxo-3-methylvalerate) and of (2R)-2,3-dihydroxy-3-methylbutanoate (2,3-dihydroxyisovalerate) into 2-oxo-3-methylbutanoate (2-oxoisovalerate), the penultimate precursor to L-isoleucine and L-valine, respectively. The sequence is that of Dihydroxy-acid dehydratase from Prochlorococcus marinus (strain MIT 9313).